A 157-amino-acid polypeptide reads, in one-letter code: Large ribosomal subunit protein uL15 (157 aa).

The disordered stretch occupies residues 1-41 (MKLHELSDNPGATKKRKRVGRGPGSGTGKMGGRGIKGQKSR). The span at 21-35 (RGPGSGTGKMGGRGI) shows a compositional bias: gly residues.

It belongs to the universal ribosomal protein uL15 family. In terms of assembly, part of the 50S ribosomal subunit.

Its function is as follows. Binds to the 23S rRNA. The polypeptide is Large ribosomal subunit protein uL15 (Jannaschia sp. (strain CCS1)).